A 514-amino-acid chain; its full sequence is ATP synthase subunit alpha (514 aa).

169-176 (GDRQTGKT) serves as a coordination point for ATP.

This sequence belongs to the ATPase alpha/beta chains family. In terms of assembly, F-type ATPases have 2 components, CF(1) - the catalytic core - and CF(0) - the membrane proton channel. CF(1) has five subunits: alpha(3), beta(3), gamma(1), delta(1), epsilon(1). CF(0) has three main subunits: a(1), b(2) and c(9-12). The alpha and beta chains form an alternating ring which encloses part of the gamma chain. CF(1) is attached to CF(0) by a central stalk formed by the gamma and epsilon chains, while a peripheral stalk is formed by the delta and b chains.

The protein localises to the cell membrane. The catalysed reaction is ATP + H2O + 4 H(+)(in) = ADP + phosphate + 5 H(+)(out). Produces ATP from ADP in the presence of a proton gradient across the membrane. The alpha chain is a regulatory subunit. In Buchnera aphidicola subsp. Baizongia pistaciae (strain Bp), this protein is ATP synthase subunit alpha.